The chain runs to 236 residues: Ribitol-5-phosphate cytidylyltransferase (236 aa).

Residues 7 to 10 (LAGG) and 80 to 86 (GTDRNET) contribute to the CTP site.

Belongs to the IspD/TarI cytidylyltransferase family. TarI subfamily.

The enzyme catalyses D-ribitol 5-phosphate + CTP + H(+) = CDP-L-ribitol + diphosphate. The protein operates within cell wall biogenesis; poly(ribitol phosphate) teichoic acid biosynthesis. In terms of biological role, catalyzes the transfer of the cytidylyl group of CTP to D-ribitol 5-phosphate. The protein is Ribitol-5-phosphate cytidylyltransferase of Listeria monocytogenes serovar 1/2a (strain ATCC BAA-679 / EGD-e).